Consider the following 81-residue polypeptide: Putative membrane protein insertion efficiency factor (81 aa).

The segment at 61-81 (NDGGYDPVPPAPSSRTSSIAE) is disordered.

Belongs to the UPF0161 family.

The protein resides in the cell inner membrane. Functionally, could be involved in insertion of integral membrane proteins into the membrane. The protein is Putative membrane protein insertion efficiency factor of Pseudomonas putida (strain ATCC 47054 / DSM 6125 / CFBP 8728 / NCIMB 11950 / KT2440).